We begin with the raw amino-acid sequence, 259 residues long: BTB/POZ domain-containing protein KCTD4 (259 aa).

Residues 1-22 (MEHKINRREKEKDYEGKHNSLE) are disordered. A BTB domain is found at 33-134 (TLMTLNVGGY…EVKSRWEKEQ (102 aa)).

The sequence is that of BTB/POZ domain-containing protein KCTD4 (KCTD4) from Bos taurus (Bovine).